Reading from the N-terminus, the 393-residue chain is Pyrin and HIN domain-containing protein 1-like (393 aa).

A Pyrin domain is found at 1-87; the sequence is MVNEYKRIVL…ANKLKNEKAK (87 aa). The segment at 82–188 is disordered; the sequence is KNEKAKAKRK…TPTRSSSRIL (107 aa). A compositionally biased stretch (basic residues) spans 87–102; sequence KAKRKGKGKRKTAAKR. 2 stretches are compositionally biased toward polar residues: residues 108–118 and 126–151; these read PSTSQPMSTTN and GRST…AIQI. A compositionally biased stretch (low complexity) spans 152–169; it reads SPTIASSSGQTSSRSSET. Positions 170–186 are enriched in polar residues; sequence LQSIIQSPETPTRSSSR. The 175-residue stretch at 219 to 393 folds into the HIN-200 domain; the sequence is NVPKEPSEEN…NPGDKLRLML (175 aa).

It belongs to the HIN-200 family.

Its subcellular location is the nucleus. This Mus musculus (Mouse) protein is Pyrin and HIN domain-containing protein 1-like.